The sequence spans 167 residues: Large ribosomal subunit protein uL10 (167 aa).

The protein belongs to the universal ribosomal protein uL10 family. In terms of assembly, part of the ribosomal stalk of the 50S ribosomal subunit. The N-terminus interacts with L11 and the large rRNA to form the base of the stalk. The C-terminus forms an elongated spine to which L12 dimers bind in a sequential fashion forming a multimeric L10(L12)X complex.

Its function is as follows. Forms part of the ribosomal stalk, playing a central role in the interaction of the ribosome with GTP-bound translation factors. This is Large ribosomal subunit protein uL10 from Latilactobacillus sakei subsp. sakei (strain 23K) (Lactobacillus sakei subsp. sakei).